Reading from the N-terminus, the 136-residue chain is MLQPKRTKFRKMMKGRNRGLATGYKVSFGEIGLQAVSRCRMTARQIESARRAMTRHVKRQGKIWIRVFPDKPITKKPLEVRMGKGKGSVEYWVAQIKPGQMLFEMQGVDEIIIREAFALAAAKLPVKTTIIKRTVM.

Belongs to the universal ribosomal protein uL16 family. In terms of assembly, part of the 50S ribosomal subunit.

Binds 23S rRNA and is also seen to make contacts with the A and possibly P site tRNAs. In Ruthia magnifica subsp. Calyptogena magnifica, this protein is Large ribosomal subunit protein uL16.